The primary structure comprises 967 residues: RNA polymerase-associated protein RapA (967 aa).

The 175-residue stretch at 163 to 337 (EVGQRTAPRV…FARLSLLDPD (175 aa)) folds into the Helicase ATP-binding domain. 176–183 (DEVGLGKT) contributes to the ATP binding site. A DEAH box motif is present at residues 283 to 286 (DEAH). The Helicase C-terminal domain occupies 489-660 (RLEWLITFLK…KFLQNPTALE (172 aa)).

The protein belongs to the SNF2/RAD54 helicase family. RapA subfamily. In terms of assembly, interacts with the RNAP. Has a higher affinity for the core RNAP than for the holoenzyme. Its ATPase activity is stimulated by binding to RNAP.

In terms of biological role, transcription regulator that activates transcription by stimulating RNA polymerase (RNAP) recycling in case of stress conditions such as supercoiled DNA or high salt concentrations. Probably acts by releasing the RNAP, when it is trapped or immobilized on tightly supercoiled DNA. Does not activate transcription on linear DNA. Probably not involved in DNA repair. The sequence is that of RNA polymerase-associated protein RapA from Pasteurella multocida (strain Pm70).